A 464-amino-acid chain; its full sequence is Hepatocyte nuclear factor 4-alpha (464 aa).

A DNA-binding region (nuclear receptor) is located at residues 57–132 (NSLCAICGDR…AGMKKEAVQN (76 aa)). NR C4-type zinc fingers lie at residues 60 to 80 (CAIC…CDGC) and 96 to 120 (CRFS…LKKC). Residues 147–376 (SSLPSINVLI…NLLQEMLLGG (230 aa)) enclose the NR LBD domain. Residues 367 to 375 (NLLQEMLLG) carry the 9aaTAD motif. Positions 410-421 (SQLHNGQMSTPE) are enriched in polar residues. Positions 410 to 433 (SQLHNGQMSTPETPQPSPPAGSGA) are disordered.

It belongs to the nuclear hormone receptor family. NR2 subfamily. Homodimerization is required for HNF4-alpha to bind to its recognition site. Expressed in liver and kidney.

It localises to the nucleus. Transcriptional regulator; binds and activates the promoter for the HNF1-alpha gene. Potential initiator of a transcriptional cascade within a subset of cells committed to a specific developmental program. Could be a determinant for asymmetry in early development. May play a role in the regulation of the circadian clock. This Xenopus laevis (African clawed frog) protein is Hepatocyte nuclear factor 4-alpha (hnf4a).